A 339-amino-acid polypeptide reads, in one-letter code: Glycerol-3-phosphate dehydrogenase [NAD(P)+] (339 aa).

Serine 13, tryptophan 14, and lysine 108 together coordinate NADPH. Residues lysine 108, glycine 139, and serine 141 each coordinate sn-glycerol 3-phosphate. Alanine 143 is a binding site for NADPH. 5 residues coordinate sn-glycerol 3-phosphate: lysine 194, aspartate 247, serine 257, arginine 258, and asparagine 259. The Proton acceptor role is filled by lysine 194. Arginine 258 contributes to the NADPH binding site. Positions 282 and 284 each coordinate NADPH.

The protein belongs to the NAD-dependent glycerol-3-phosphate dehydrogenase family.

It is found in the cytoplasm. It catalyses the reaction sn-glycerol 3-phosphate + NAD(+) = dihydroxyacetone phosphate + NADH + H(+). The enzyme catalyses sn-glycerol 3-phosphate + NADP(+) = dihydroxyacetone phosphate + NADPH + H(+). It functions in the pathway membrane lipid metabolism; glycerophospholipid metabolism. Functionally, catalyzes the reduction of the glycolytic intermediate dihydroxyacetone phosphate (DHAP) to sn-glycerol 3-phosphate (G3P), the key precursor for phospholipid synthesis. The polypeptide is Glycerol-3-phosphate dehydrogenase [NAD(P)+] (Streptococcus equi subsp. equi (strain 4047)).